Consider the following 535-residue polypeptide: T-complex protein 1 subunit zeta 1 (535 aa).

It belongs to the TCP-1 chaperonin family. As to quaternary structure, heterooligomeric complex of about 850 to 900 kDa that forms two stacked rings, 12 to 16 nm in diameter.

It is found in the cytoplasm. In terms of biological role, molecular chaperone; assists the folding of proteins upon ATP hydrolysis. Known to play a role, in vitro, in the folding of actin and tubulin. This chain is T-complex protein 1 subunit zeta 1, found in Arabidopsis thaliana (Mouse-ear cress).